Here is a 355-residue protein sequence, read N- to C-terminus: MPIDTPLIPHKPISRYRSGRLEGLESESSSESDYEEVSDSHDQENSISSSRHVITPVFEKEGISETKTSSNFQNINPVQTIDNSASEYETDASSAEGGSNSAASSSEEEDSSDSEYEMELRRRTLLLPPKFTSKVIKNRAKANEEDTEVLKKVTSQKILEETIKRELLLKETKNNNELLNDIDDTDGIDPQSEYELWKLRHLLRKKRDKEKSLELEREKMAIEERRLMNSEEREAQDLKDAEASRRGKKKSSMQFLQKYYHKGAFYQNEDIVSKRDYSEATEGEVLNKDLLPKPMQIRGDLFAKAGQTRWTHLANEDTTKEGSAWYDPKNPILQKNLHRLGGLHSDSPLSKRKRT.

3 disordered regions span residues 1 to 121 (MPID…MELR), 226 to 253 (RLMN…KSSM), and 336 to 355 (NLHR…RKRT). The span at 24–37 (LESESSSESDYEEV) shows a compositional bias: acidic residues. Polar residues predominate over residues 65–87 (ETKTSSNFQNINPVQTIDNSASE). The segment covering 91–105 (DASSAEGGSNSAASS) has biased composition (low complexity). Residues 106-117 (SEEEDSSDSEYE) show a composition bias toward acidic residues. Over residues 226–245 (RLMNSEEREAQDLKDAEASR) the composition is skewed to basic and acidic residues.

This is an uncharacterized protein from Schizosaccharomyces pombe (strain 972 / ATCC 24843) (Fission yeast).